Consider the following 664-residue polypeptide: Prelamin-A/C (664 aa).

M1 carries the post-translational modification N-acetylmethionine. Positions 1–24 (METPSQRRATRSGAQASSTPLSPT) are disordered. The head stretch occupies residues 1–33 (METPSQRRATRSGAQASSTPLSPTRITRLQEKE). Positions 1–130 (METPSQRRAT…TKKEGDLMAA (130 aa)) are interaction with MLIP. T3 carries the post-translational modification Phosphothreonine. S5 carries the post-translational modification Phosphoserine. A Phosphothreonine modification is found at T10. Phosphoserine occurs at positions 12 and 18. Position 19 is a phosphothreonine (T19). S22 is modified (phosphoserine). Positions 31–387 (EKEDLQELND…KLLEGEEERL (357 aa)) constitute an IF rod domain. N6-acetyllysine; alternate is present on K32. Position 32 is an N6-succinyllysine; alternate (K32). A Glycyl lysine isopeptide (Lys-Gly) (interchain with G-Cter in SUMO2); alternate cross-link involves residue K32. The coil 1A stretch occupies residues 34–70 (DLQELNDRLAVYIDRVRSLETENAGLRLRITESEEVV). S51, S66, and S71 each carry phosphoserine. Residues 71–80 (SREVSGIKSA) form a linker 1 region. An N6-acetyllysine mark is found at K78 and K97. A coil 1B region spans residues 81-218 (YEAELGDARK…NIYSEELRET (138 aa)). A Glycyl lysine isopeptide (Lys-Gly) (interchain with G-Cter in SUMO2) cross-link involves residue K97. S107 carries the phosphoserine modification. Residues K108, K114, K123, K135, K144, and K155 each carry the N6-acetyllysine modification. An N6-acetyllysine; alternate modification is found at K171. Residue K171 is modified to N6-succinyllysine; alternate. A Glycyl lysine isopeptide (Lys-Gly) (interchain with G-Cter in SUMO2); alternate cross-link involves residue K171. N6-acetyllysine occurs at positions 180, 201, and 208. K201 is covalently cross-linked (Glycyl lysine isopeptide (Lys-Gly) (interchain with G-Cter in SUMO2); alternate). Residue K201 forms a Glycyl lysine isopeptide (Lys-Gly) (interchain with G-Cter in SUMO); alternate linkage. A Glycyl lysine isopeptide (Lys-Gly) (interchain with G-Cter in SUMO2) cross-link involves residue K208. S212 is modified (phosphoserine). Residues K219 and K233 each participate in a glycyl lysine isopeptide (Lys-Gly) (interchain with G-Cter in SUMO2) cross-link. The tract at residues 219–242 (KRRHETRLVEIDNGKQREFESRLA) is linker 2. An N6-acetyllysine mark is found at K233, K260, K265, and K270. The interval 243–383 (DALQDLRAQH…HAYRKLLEGE (141 aa)) is coil 2. K260 is covalently cross-linked (Glycyl lysine isopeptide (Lys-Gly) (interchain with G-Cter in SUMO2); alternate). K270 participates in a covalent cross-link: Glycyl lysine isopeptide (Lys-Gly) (interchain with G-Cter in SUMO2); alternate. Residues S277, S282, S301, and S307 each carry the phosphoserine modification. Residue K311 forms a Glycyl lysine isopeptide (Lys-Gly) (interchain with G-Cter in SUMO2); alternate linkage. K311, K316, and K341 each carry N6-acetyllysine. Residues K366 and K378 each participate in a glycyl lysine isopeptide (Lys-Gly) (interchain with G-Cter in SUMO2) cross-link. A disordered region spans residues 384-442 (EERLRLSPSPTSQRSRGRASSHSSQTQSGGSVTKKRKLESSESRSSFSQHARTSGRVAV). The interval 384–664 (EERLRLSPSP…TQSPQNCSIM (281 aa)) is tail. Phosphoserine is present on residues S390, S392, S395, S398, S403, S404, S406, S407, and S414. A compositionally biased stretch (low complexity) spans 403–414 (SSHSSQTQSGGS). Residue T416 is modified to Phosphothreonine. N6-acetyllysine is present on K417. Glycyl lysine isopeptide (Lys-Gly) (interchain with G-Cter in SUMO2) cross-links involve residues K417 and K420. The Nuclear localization signal motif lies at 417-422 (KKRKLE). Phosphoserine is present on residues S423, S426, S429, and S431. In terms of domain architecture, LTD spans 428–545 (SSFSQHARTS…EEVAMRKLVR (118 aa)). K450 is covalently cross-linked (Glycyl lysine isopeptide (Lys-Gly) (interchain with G-Cter in SUMO2); alternate). 2 positions are modified to N6-acetyllysine: K450 and K457. Residues S458 and S463 each carry the phosphoserine modification. Glycyl lysine isopeptide (Lys-Gly) (interchain with G-Cter in SUMO2) cross-links involve residues K470 and K486. K486 carries the post-translational modification N6-acetyllysine. Residues T496 and T505 each carry the phosphothreonine modification. A phosphoserine mark is found at S533 and S546. Phosphothreonine is present on T548. Residues 555-577 (DEDGDDLLHHHHGSHGSSSGDPA) are disordered. Residues S568 and S571 each carry the phosphoserine modification. Residue K597 forms a Glycyl lysine isopeptide (Lys-Gly) (interchain with G-Cter in SUMO2); alternate linkage. Residue K597 forms a Glycyl lysine isopeptide (Lys-Gly) (interchain with G-Cter in SUMO1); alternate linkage. The segment at 598 to 620 (ASASSSGAQVGGSISSGSSASSV) is disordered. Phosphoserine is present on residues S612, S613, S616, and S619. S625 and S628 each carry an O-linked (GlcNAc) serine glycan. Phosphoserine occurs at positions 628, 632, and 636. A propeptide spans 647-661 (LLGNSRPRTQSPQNC) (removed in Lamin-A/C form). C661 carries the cysteine methyl ester modification. A lipid anchor (S-farnesyl cysteine) is attached at C661. Residues 662 to 664 (SIM) constitute a propeptide, removed in Prelamin-A/C form and in Lamin-A/C form.

The protein belongs to the intermediate filament family. Homodimer of lamin A and lamin C. Lamin dimers then assemble into dimeric head-to-tail polymers. Ultimately, two head-to-tail polymers assemble laterally into a protofilament with a uniformly shaped rod of 3.5 nm in diameter. Interacts with lamin-associated polypeptides IA, IB and TMPO-alpha, RB1 and with emerin. Interacts with SREBF1, SREBF2, SUN2 and TMEM43. Interacts with TMEM201. Proteolytically processed isoform A interacts with NARF. Interacts with SUN1. Interacts with MLIP. Interacts with DMPK; may regulate nuclear envelope stability. Interacts with SUV39H1; the interaction increases stability of SUV39H1. Interacts with SYNE2. Interacts with ITSN1 isoform 2. Interacts with IFFO1; enables the formation of an interior nucleoskeleton that is recruited to DNA double-strand breaks. In terms of assembly, interacts with EMD. As to quaternary structure, interacts (via C-terminus) with LEMD2 (via N-terminus) (in vitro). Proteolytic cleavage of the C-terminal of 18 residues of prelamin-A/C results in the production of lamin-A/C. The prelamin-A/C maturation pathway includes farnesylation of CAAX motif by protein farnesyltransferase (FNTA and FNTB), removal of the last three amino acids (-AAX) by RCE1/FACE2 and/or ZMPSTE24, methylation of the C-terminal cysteine by ICMT and endoproteolytic removal of the last 15 C-terminal amino acids by ZMPSTE24. Proteolytic cleavage requires prior farnesylation and methylation, and absence of these blocks cleavage. In terms of processing, farnesylation of prelamin-A/C facilitates nuclear envelope targeting. Post-translationally, phosphorylation plays a key role in lamin organization, subcellular localization and nuclear envelope disintegration. Phosphorylation by CDK1 at Ser-22 and Ser-392 at the onset of mitosis drives lamin disassembly and nuclear envelope breakdown. Phosphorylation at Ser-22 and Ser-392 during interphase promotes localization to the nucleoplasm and regulates lamina assembly. Phosphorylation at Ser-22, Ser-392 and Ser-628 during interphase causes redistribution between the nucleus and the cytoplasm. Phosphorylation at Ser-22 by CDK1 regulates matrix stiffness. Phosphorylation status of Ser-22 determines its localization between double-strand break (DSB) sites and the nuclear matrix. Phosphorylated by ATR at Ser-282 in response to DNA damage, leading to lamin disassembly and nuclear envelope rupture. Phosphorylation also regulates stability in micronuclei arising from genome instability: phosphorylation at Ser-395 by ATR in response to genome instability and double-stranded DNA breaks primes LMNA for subsequent phosphorylation at Ser-392 by CDK1 and micronuclei envelope rupture. The rupture of micronuclear envelope triggers the cGAS-STING pathway thereby activating the type I interferon response and innate immunity. Acetylation by KAT8 is required for nuclear architecture. In terms of processing, sumoylation is necessary for the localization to the nuclear envelope.

Its subcellular location is the nucleus lamina. It localises to the nucleus envelope. The protein localises to the nucleus. It is found in the nucleoplasm. The protein resides in the nucleus matrix. In terms of biological role, lamins are intermediate filament proteins that assemble into a filamentous meshwork, and which constitute the major components of the nuclear lamina, a fibrous layer on the nucleoplasmic side of the inner nuclear membrane. Lamins provide a framework for the nuclear envelope, bridging the nuclear envelope and chromatin, thereby playing an important role in nuclear assembly, chromatin organization, nuclear membrane and telomere dynamics. Lamin A and C also regulate matrix stiffness by conferring nuclear mechanical properties. The structural integrity of the lamina is strictly controlled by the cell cycle, as seen by the disintegration and formation of the nuclear envelope in prophase and telophase, respectively. Lamin A and C are present in equal amounts in the lamina of mammals. Also invoved in DNA repair: recruited by DNA repair proteins XRCC4 and IFFO1 to the DNA double-strand breaks (DSBs) to prevent chromosome translocation by immobilizing broken DNA ends. Required for normal development of peripheral nervous system and skeletal muscle and for muscle satellite cell proliferation. Required for osteoblastogenesis and bone formation. Also prevents fat infiltration of muscle and bone marrow, helping to maintain the volume and strength of skeletal muscle and bone. Required for cardiac homeostasis. Functionally, prelamin-A/C can accelerate smooth muscle cell senescence. It acts to disrupt mitosis and induce DNA damage in vascular smooth muscle cells (VSMCs), leading to mitotic failure, genomic instability, and premature senescence. The polypeptide is Prelamin-A/C (LMNA) (Sus scrofa (Pig)).